Consider the following 267-residue polypeptide: Fibroin light chain (267 aa).

An N-terminal signal peptide occupies residues 1-16 (MLPFVLVLLVATSALA). Ser19 is modified (N-acetylserine; in short form). A disulfide bridge links Cys103 with Cys162.

As to quaternary structure, silk fibroin elementary unit consists in a disulfide-linked heavy and light chain and a p25 glycoprotein in molar ratios of 6:6:1. This results in a complex of approximately 2.3 MDa. Partially N-terminally processed to yield a short form which lacks the first two residues of the long form. In terms of processing, the interchain disulfide bridge is essential for the intracellular transport and secretion of fibroin. As to expression, produced exclusively in the posterior (PSG) section of silk glands, which are essentially modified salivary glands.

It is found in the secreted. It is likely that the major role of L-chain is to prevent the retention of H-chain in ER by forming the disulfide linkage. This chain is Fibroin light chain (FIBL), found in Galleria mellonella (Greater wax moth).